Here is a 422-residue protein sequence, read N- to C-terminus: NADH-quinone oxidoreductase subunit D 1 (422 aa).

Belongs to the complex I 49 kDa subunit family. NDH-1 is composed of 14 different subunits. Subunits NuoB, C, D, E, F, and G constitute the peripheral sector of the complex.

It localises to the cell membrane. It carries out the reaction a quinone + NADH + 5 H(+)(in) = a quinol + NAD(+) + 4 H(+)(out). NDH-1 shuttles electrons from NADH, via FMN and iron-sulfur (Fe-S) centers, to quinones in the respiratory chain. The immediate electron acceptor for the enzyme in this species is believed to be ubiquinone. Couples the redox reaction to proton translocation (for every two electrons transferred, four hydrogen ions are translocated across the cytoplasmic membrane), and thus conserves the redox energy in a proton gradient. The protein is NADH-quinone oxidoreductase subunit D 1 of Herpetosiphon aurantiacus (strain ATCC 23779 / DSM 785 / 114-95).